The primary structure comprises 3073 residues: Adhesion G-protein coupled receptor G4 (3073 aa).

The N-terminal stretch at 1–25 (MRKHILHQRLCGLILVSSFIFLTDS) is a signal peptide. Over 26–2691 (LSLKGKRLDF…RSTVDAVNER (2666 aa)) the chain is Extracellular. The Pentraxin (PTX) domain maps to 29–228 (KGKRLDFYGE…SPTVDRRLRC (200 aa)). 2 disulfide bridges follow: Cys-58/Cys-123 and Cys-200/Cys-228. N-linked (GlcNAc...) asparagine glycosylation occurs at Asn-233. The disordered stretch occupies residues 253-272 (SQTTGLNPHKTSHSSTLLPE). Asn-662 is a glycosylation site (N-linked (GlcNAc...) asparagine). Composition is skewed to polar residues over residues 671 to 696 (GNAT…ESKV) and 929 to 951 (GNSA…SSST). 2 disordered regions span residues 671-697 (GNAT…SKVT) and 924-951 (SEKS…SSST). N-linked (GlcNAc...) asparagine glycans are attached at residues Asn-1141, Asn-1304, and Asn-1495. Disordered regions lie at residues 1565–1595 (FTSS…AGPT), 1741–1760 (TLTN…STPT), and 1945–1972 (ITLS…SDSR). Over residues 1945 to 1954 (ITLSSNPSVN) the composition is skewed to polar residues. The segment covering 1955–1972 (SRATSPTWSSSSLPSDSR) has biased composition (low complexity). The region spanning 2535-2684 (SSEEVIAPQI…GVLMDLSRST (150 aa)) is the GAIN-B domain. 2 disulfides stabilise this stretch: Cys-2635–Cys-2666 and Cys-2654–Cys-2668. A GPS region spans residues 2635–2684 (CAFWDFDTNNGLGGWNPSGCKLKESNINYTICQCNHLTHFGVLMDLSRST). The segment at 2673–2684 (HFGVLMDLSRST) is stachel. A helical transmembrane segment spans residues 2692-2712 (ILVIITYTGCGISSIFLGIAM). Residues 2713–2728 (VTYIAFHKLRKDYPSK) lie on the Cytoplasmic side of the membrane. Residues 2729–2749 (ILINLCTALLMLNLAFLVNSW) form a helical membrane-spanning segment. At 2750 to 2755 (LTSFQK) the chain is on the extracellular side. Residues 2756-2776 (VGLCITAAVALHYFLLVSLTW) traverse the membrane as a helical segment. Cys-2759 and Cys-2836 are joined by a disulfide. The Cytoplasmic segment spans residues 2777-2798 (MGLEAVHMYFALVKVFNTYIPN). A helical membrane pass occupies residues 2799 to 2819 (YILKFCLAGWGIPAITVAIIL). Topologically, residues 2820–2842 (SVRKDLYGTLSPTTPFCWIKDDH) are extracellular. The helical transmembrane segment at 2843 to 2863 (IFYISVVAYFCLIFLMNLSMF) threads the bilayer. The Cytoplasmic portion of the chain corresponds to 2864–2892 (CTVLVQLTSVKSQSQKTRKKMILNDLKGT). Residues 2893 to 2913 (ISLTFLLGLTWGFAFFAWGPV) form a helical membrane-spanning segment. A topological domain (extracellular) is located at residue Arg-2914. Residues 2915 to 2935 (IFFLYLFAICNTLQGFLIFVF) traverse the membrane as a helical segment. Residues 2936 to 3073 (YCVMKESVRE…SSGLGEMFNL (138 aa)) are Cytoplasmic-facing.

Belongs to the G-protein coupled receptor 2 family. Adhesion G-protein coupled receptor (ADGR) subfamily. In terms of assembly, homodimer; homodimerizes via its Pentraxin domain in a calcium-independent manner. Heterodimer of 2 chains generated by proteolytic processing; the large extracellular N-terminal fragment and the membrane-bound C-terminal fragment predominantly remain associated and non-covalently linked. Post-translationally, autoproteolytically processed at the GPS region of the GAIN-B domain; this cleavage modulates receptor activity.

The protein resides in the membrane. Its activity is regulated as follows. Forms a heterodimer of 2 chains generated by proteolytic processing that remain associated through non-covalent interactions mediated by the GAIN-B domain. In the inactivated receptor, the Stachel sequence (also named stalk) is embedded in the GAIN-B domain, where it adopts a beta-strand conformation. On activation, the Stachel moves into the 7 transmembrane region and adopts a twisted hook-shaped configuration that forms contacts within the receptor, leading to coupling of a G-alpha protein, which activates signaling. The cleaved GAIN-B and N-terminal domains can then dissociate from the rest of the receptor. Orphan adhesion G-protein coupled receptor (aGPCR). Ligand binding causes a conformation change that triggers signaling via guanine nucleotide-binding proteins (G proteins) and modulates the activity of downstream effectors, such as adenylate cyclase. ADGRG4 is coupled to G(s) G proteins and mediates activation of adenylate cyclase activity. May be act as sensor of mechanical forces. The polypeptide is Adhesion G-protein coupled receptor G4 (Mus musculus (Mouse)).